Here is a 199-residue protein sequence, read N- to C-terminus: Twist-related protein 1 (199 aa).

The segment covering 1–18 (MMQDVSSSPVSPADDSLS) has biased composition (low complexity). The disordered stretch occupies residues 1–102 (MMQDVSSSPV…GGGSPQSYEE (102 aa)). The segment covering 34 to 43 (RGGRKRRSSR) has biased composition (basic residues). 2 stretches are compositionally biased toward gly residues: residues 46 to 65 (AGGG…GGDE) and 80 to 96 (GCGG…GGGS). One can recognise a bHLH domain in the interval 105–156 (TQRVMANVRERQRTQSLNEAFAALRKIIPTLPSDKLSKIQTLKLAARYIDFL). Positions 158 to 188 (QVLQSDELDSKMASCSYVAHERLSYAFSVWR) are sufficient for transactivation activity.

Efficient DNA binding requires dimerization with another bHLH protein. Homodimer or heterodimer with E proteins such as TCF3. ID1 binds preferentially to TCF3 but does not interact efficiently with TWIST1 so ID1 levels control the amount of TCF3 available to dimerize with TWIST and thus determine the type of dimer formed.

Its subcellular location is the nucleus. In terms of biological role, acts as a transcriptional regulator. Inhibits myogenesis by sequestrating E proteins, inhibiting trans-activation by MEF2, and inhibiting DNA-binding by MYOD1 through physical interaction. This interaction probably involves the basic domains of both proteins. Also represses expression of pro-inflammatory cytokines such as TNFA and IL1B. Regulates cranial suture patterning and fusion. Activates transcription as a heterodimer with E proteins. Regulates gene expression differentially, depending on dimer composition. Homodimers induce expression of FGFR2 and POSTN while heterodimers repress FGFR2 and POSTN expression and induce THBS1 expression. Heterodimerization is also required for osteoblast differentiation. Represses the activity of the circadian transcriptional activator: NPAS2-BMAL1 heterodimer. In Microcebus murinus (Gray mouse lemur), this protein is Twist-related protein 1 (TWIST1).